Reading from the N-terminus, the 874-residue chain is Valine--tRNA ligase (874 aa).

Positions 1 to 22 (MTENSQQPQPAPSTELPTQYTP) are disordered. Residues 57–67 (PNVTGSLHLGH) carry the 'HIGH' region motif. Residues 531 to 535 (KMSKS) carry the 'KMSKS' region motif. Lysine 534 is an ATP binding site. The stretch at 805-871 (VIDFAAERKR…TRITAQLEKL (67 aa)) forms a coiled coil.

Belongs to the class-I aminoacyl-tRNA synthetase family. ValS type 1 subfamily. Monomer.

The protein localises to the cytoplasm. The catalysed reaction is tRNA(Val) + L-valine + ATP = L-valyl-tRNA(Val) + AMP + diphosphate. Its function is as follows. Catalyzes the attachment of valine to tRNA(Val). As ValRS can inadvertently accommodate and process structurally similar amino acids such as threonine, to avoid such errors, it has a 'posttransfer' editing activity that hydrolyzes mischarged Thr-tRNA(Val) in a tRNA-dependent manner. In Streptomyces coelicolor (strain ATCC BAA-471 / A3(2) / M145), this protein is Valine--tRNA ligase.